The sequence spans 311 residues: Porphobilinogen deaminase (311 aa).

S-(dipyrrolylmethanemethyl)cysteine is present on cysteine 241.

This sequence belongs to the HMBS family. In terms of assembly, monomer. The cofactor is dipyrromethane.

It catalyses the reaction 4 porphobilinogen + H2O = hydroxymethylbilane + 4 NH4(+). Its pathway is porphyrin-containing compound metabolism; protoporphyrin-IX biosynthesis; coproporphyrinogen-III from 5-aminolevulinate: step 2/4. In terms of biological role, tetrapolymerization of the monopyrrole PBG into the hydroxymethylbilane pre-uroporphyrinogen in several discrete steps. In Bacillus pumilus (strain SAFR-032), this protein is Porphobilinogen deaminase.